Consider the following 168-residue polypeptide: Photosystem I assembly protein Ycf3 (168 aa).

3 TPR repeats span residues 35–68 (AFTYYRDGMSAQSEGNYAEALQNYYEAMRLEIDP), 72–105 (SYILYNIGLIHTSNGEHTKALEYYFRALERNPFL), and 120–153 (GEQAIQQGDSEMAEAWFAQAAEYWKQAITLTPGN).

Belongs to the Ycf3 family. Interacts with Y3IP1.

It localises to the plastid. It is found in the chloroplast thylakoid membrane. Functionally, essential for the assembly of the photosystem I (PSI) complex. May act as a chaperone-like factor to guide the assembly of the PSI subunits. This is Photosystem I assembly protein Ycf3 from Arabidopsis thaliana (Mouse-ear cress).